A 68-amino-acid polypeptide reads, in one-letter code: Conotoxin ba14a (68 aa).

Residues 1-20 (MKLSVMFIVALVLSLSMTDG) form the signal peptide. A propeptide spanning residues 21-50 (LPRRAENGGRIFRQHSPDSMDPQTRQIKTR) is cleaved from the precursor.

Contains 2 disulfide bonds. In terms of tissue distribution, expressed by the venom duct.

The protein resides in the secreted. The protein is Conotoxin ba14a of Conus bayani (Bayan's cone).